The sequence spans 466 residues: 3-isopropylmalate dehydratase large subunit (466 aa).

The [4Fe-4S] cluster site is built by Cys-347, Cys-407, and Cys-410.

The protein belongs to the aconitase/IPM isomerase family. LeuC type 1 subfamily. Heterodimer of LeuC and LeuD. The cofactor is [4Fe-4S] cluster.

The enzyme catalyses (2R,3S)-3-isopropylmalate = (2S)-2-isopropylmalate. It participates in amino-acid biosynthesis; L-leucine biosynthesis; L-leucine from 3-methyl-2-oxobutanoate: step 2/4. Catalyzes the isomerization between 2-isopropylmalate and 3-isopropylmalate, via the formation of 2-isopropylmaleate. The polypeptide is 3-isopropylmalate dehydratase large subunit (Shigella boydii serotype 4 (strain Sb227)).